The following is a 50-amino-acid chain: Sperm protamine P1 (50 aa).

The protein belongs to the protamine P1 family. In terms of assembly, cross-linked by interchain disulfide bonds around the DNA-helix. In terms of tissue distribution, testis.

It is found in the nucleus. It localises to the chromosome. In terms of biological role, protamines substitute for histones in the chromatin of sperm during the haploid phase of spermatogenesis. They compact sperm DNA into a highly condensed, stable and inactive complex. The protein is Sperm protamine P1 (PRM1) of Saimiri sciureus (Common squirrel monkey).